Consider the following 253-residue polypeptide: Redox-sensing transcriptional repressor Rex (253 aa).

A DNA-binding region (H-T-H motif) is located at residues 26–65 (LYLRALTALSERSVPTVSSEELATAAGVNSAKLRKDFSYL). 100–105 (GIGNLG) provides a ligand contact to NAD(+). Positions 217–253 (RKAGEDSAAEDEGAPPMRATPASRKGPDGDMPAVMPA) are disordered.

Belongs to the transcriptional regulatory Rex family. Homodimer.

It localises to the cytoplasm. Its function is as follows. Modulates transcription in response to changes in cellular NADH/NAD(+) redox state. The polypeptide is Redox-sensing transcriptional repressor Rex (Streptomyces griseus subsp. griseus (strain JCM 4626 / CBS 651.72 / NBRC 13350 / KCC S-0626 / ISP 5235)).